Here is a 318-residue protein sequence, read N- to C-terminus: tRNA-cytidine(32) 2-sulfurtransferase (318 aa).

The PP-loop motif motif lies at 52-57 (SGGKDS). Residues Cys-127, Cys-130, and Cys-218 each contribute to the [4Fe-4S] cluster site.

The protein belongs to the TtcA family. In terms of assembly, homodimer. Requires Mg(2+) as cofactor. [4Fe-4S] cluster serves as cofactor.

The protein resides in the cytoplasm. It carries out the reaction cytidine(32) in tRNA + S-sulfanyl-L-cysteinyl-[cysteine desulfurase] + AH2 + ATP = 2-thiocytidine(32) in tRNA + L-cysteinyl-[cysteine desulfurase] + A + AMP + diphosphate + H(+). It functions in the pathway tRNA modification. In terms of biological role, catalyzes the ATP-dependent 2-thiolation of cytidine in position 32 of tRNA, to form 2-thiocytidine (s(2)C32). The sulfur atoms are provided by the cysteine/cysteine desulfurase (IscS) system. The sequence is that of tRNA-cytidine(32) 2-sulfurtransferase from Actinobacillus pleuropneumoniae serotype 5b (strain L20).